The following is an 87-amino-acid chain: Sodium channel neurotoxin MeuNaTxalpha-5* (87 aa).

The N-terminal stretch at Met1–Ser19 is a signal peptide. The LCN-type CS-alpha/beta domain maps to Arg21 to His85. 4 disulfide bridges follow: Cys31–Cys84, Cys35–Cys57, Cys43–Cys67, and Cys47–Cys69. A propeptide spans Arg86 to Arg87 (removed by a carboxypeptidase).

Belongs to the long (4 C-C) scorpion toxin superfamily. Sodium channel inhibitor family. Alpha subfamily. Expressed by the venom gland.

The protein localises to the secreted. Functionally, alpha toxins bind voltage-independently at site-3 of sodium channels (Nav) and inhibit the inactivation of the activated channels, thereby blocking neuronal transmission. This toxin inhibits inactivation of Nav1.6/SCN8A (EC(50)=790 nM) and drosophila DmNav1 (EC(50)=280 nM). The toxin (1 uM) does not significantly shift the midpoint of activation at the two channels, but induces a significant depolarizing shift in the V(1/2) of inactivation of the channels. Has antimicrobial activity. The chain is Sodium channel neurotoxin MeuNaTxalpha-5* from Mesobuthus eupeus (Lesser Asian scorpion).